The chain runs to 624 residues: MGNDKTNMIIAIALSLAVLLGWNYFVTAPQVERQRQQQAAQVNPSQGVNPSQGVDPSQGVNASPSPKEGGPSAPVPGTLPGAAGGSPQAALARDEALARAPRVRIDTEALRGSVALKGGRIDDVALKGYHETVDPKSPEIVLLSPAGSANPYYAEFGWVGQNAGPLPGSDTVWTADGDVLTAKKPLVLTFDNGAGLVFRRTLSVDDKYMFTIEDSVENKGPNPVTLYPYGLVSRWGKPHTQGYYVLHEGMIGVVGDKGLQEYTYDKMAKENPLGAPGTRGVSWPGATGGFLGITDKYWAAATIPDQQAPYTGSFTERDEGATKVYQASSLGEARAVAPGASVQASQRLFAGAKEVSTVDAYREKLNIKQFDLLIDWGWFYFITKPMFKALDLFYKLFGNFGVSILVVTLILKLFFLPIANRSYVSMAKMKAVQPEMTAIRERYADDKVKQQQAMMELYKKEKINPVAGCWPVLIQIPVFFSLYKVLFVTIEMRHAPFFGWIRDLAAPDPTSIVNLFGLLPFTPPDLLHLGVWPIVMGITMFLQMKMNPAPPDPVQAQVFTFMPIIFTFMLGSFPAGLVIYWAWNNLLSILQQYWIMRRNGVKVELWDNLRSTFQRRTQVKTAKG.

Residues 8 to 28 traverse the membrane as a helical segment; that stretch reads MIIAIALSLAVLLGWNYFVTA. The disordered stretch occupies residues 36 to 95; sequence QQQAAQVNPSQGVNPSQGVDPSQGVNASPSPKEGGPSAPVPGTLPGAAGGSPQAALARDE. A compositionally biased stretch (polar residues) spans 43-64; it reads NPSQGVNPSQGVDPSQGVNASP. A run of 5 helical transmembrane segments spans residues 370-390, 396-416, 470-490, 526-542, and 559-579; these read FDLLIDWGWFYFITKPMFKAL, LFGNFGVSILVVTLILKLFFL, WPVLIQIPVFFSLYKVLFVTI, LLHLGVWPIVMGITMFL, and FTFMPIIFTFMLGSFPAGLVI.

This sequence belongs to the OXA1/ALB3/YidC family. Type 1 subfamily. In terms of assembly, interacts with the Sec translocase complex via SecD. Specifically interacts with transmembrane segments of nascent integral membrane proteins during membrane integration.

Its subcellular location is the cell inner membrane. Its function is as follows. Required for the insertion and/or proper folding and/or complex formation of integral membrane proteins into the membrane. Involved in integration of membrane proteins that insert both dependently and independently of the Sec translocase complex, as well as at least some lipoproteins. Aids folding of multispanning membrane proteins. This Methylobacterium sp. (strain 4-46) protein is Membrane protein insertase YidC.